The chain runs to 182 residues: ATP-dependent protease subunit HslV (182 aa).

Thr6 is a catalytic residue. Residues Ala164, Cys167, and Thr170 each coordinate Na(+).

Belongs to the peptidase T1B family. HslV subfamily. In terms of assembly, a double ring-shaped homohexamer of HslV is capped on each side by a ring-shaped HslU homohexamer. The assembly of the HslU/HslV complex is dependent on binding of ATP.

It localises to the cytoplasm. It catalyses the reaction ATP-dependent cleavage of peptide bonds with broad specificity.. Its activity is regulated as follows. Allosterically activated by HslU binding. Its function is as follows. Protease subunit of a proteasome-like degradation complex believed to be a general protein degrading machinery. In Borreliella burgdorferi (strain ATCC 35210 / DSM 4680 / CIP 102532 / B31) (Borrelia burgdorferi), this protein is ATP-dependent protease subunit HslV.